We begin with the raw amino-acid sequence, 142 residues long: Putative transcriptional regulatory protein PF0535 (142 aa).

This sequence belongs to the Tfx family.

In terms of biological role, putative transcriptional regulator. The chain is Putative transcriptional regulatory protein PF0535 from Pyrococcus furiosus (strain ATCC 43587 / DSM 3638 / JCM 8422 / Vc1).